The sequence spans 416 residues: MAAALRSAGVLLRDRLLYGGSRACQPRRCQSGAATAAAATETAQRARSPKPQAQPGNRKPRTGILMLNMGGPETVEEVQDFLQRLFLDQDLMTLPVQDKLGPFIAKRRTPKIQEQYRRIGGGSPIKMWTSKQGEGMVKLLDELSPHTAPHKYYIGFRYVHPLTEEAIEEMERDGLERAVAFTQYPQYSCSTTGSSLNAIYRYYNEVGRKPTMKWSTIDRWPTHPLLIQCFADHILKELDHFPPEKRREVVILFSAHSLPMSVVNRGDPYPQEVGATVQRVMDKLGYSNPYRLVWQSKVGPMPWLGPQTDEAIKGLCKRGRKNILLVPIAFTSDHIETLYELDIEYSQVLASECGLENIRRAESLNGNPLFSKALADLVHSHLQSKERCSTQLTLSCPLCVNPTCRETKSFFTSQQL.

A mitochondrion-targeting transit peptide spans 1–47 (MAAALRSAGVLLRDRLLYGGSRACQPRRCQSGAATAAAATETAQRAR). The interval 41–62 (ETAQRARSPKPQAQPGNRKPRT) is disordered. An N6-acetyllysine modification is found at Lys50. Arg108, Tyr116, and Ser123 together coordinate protoporphyrin IX. The residue at position 131 (Lys131) is an N6-succinyllysine. A [2Fe-2S] cluster-binding site is contributed by Cys189. The active site involves His223. Position 283 is an N6-acetyllysine; alternate (Lys283). N6-succinyllysine; alternate is present on Lys283. Asp376 is an active-site residue. Residues Cys396, Cys399, and Cys404 each contribute to the [2Fe-2S] cluster site. Lys408 bears the N6-acetyllysine; alternate mark. Position 408 is an N6-succinyllysine; alternate (Lys408).

Belongs to the ferrochelatase family. In terms of assembly, homodimer. Homotetramer. Interaction with PGRMC1; the interaction results in decreased FECH activity. Interacts with ABCB10 and SLC25A37; this interaction forms an oligomeric complex. Forms a complex with ABCB7 and ABCB10, where a dimeric FECH bridges ABCB7 and ABCB10 homodimers; this complex may be required for cellular iron homeostasis, mitochondrial function and heme biosynthesis. Interacts with ABCB7 and ABCB10. The cofactor is [2Fe-2S] cluster.

The protein localises to the mitochondrion inner membrane. It catalyses the reaction heme b + 2 H(+) = protoporphyrin IX + Fe(2+). It participates in porphyrin-containing compound metabolism; protoheme biosynthesis; protoheme from protoporphyrin-IX: step 1/1. Catalyzes the ferrous insertion into protoporphyrin IX and participates in the terminal step in the heme biosynthetic pathway. This is Ferrochelatase, mitochondrial from Bos taurus (Bovine).